The chain runs to 645 residues: UvrABC system protein B (645 aa).

In terms of domain architecture, Helicase ATP-binding spans 24–414 (AGLNDNKRDQ…LFVEQVIRPT (391 aa)). 37–44 (GVTGSGKT) provides a ligand contact to ATP. The short motif at 90–113 (YYDYYQPEAYLPQTDTYIEKDSVI) is the Beta-hairpin element. Positions 426-591 (AEAQVYDVVH…VLPKTIIKPI (166 aa)) constitute a Helicase C-terminal domain. In terms of domain architecture, UVR spans 610–645 (KDTVSSLRKQMLAHAKNLEFEEAAKIKNIIGRINNL).

This sequence belongs to the UvrB family. In terms of assembly, forms a heterotetramer with UvrA during the search for lesions. Interacts with UvrC in an incision complex.

The protein resides in the cytoplasm. The UvrABC repair system catalyzes the recognition and processing of DNA lesions. A damage recognition complex composed of 2 UvrA and 2 UvrB subunits scans DNA for abnormalities. Upon binding of the UvrA(2)B(2) complex to a putative damaged site, the DNA wraps around one UvrB monomer. DNA wrap is dependent on ATP binding by UvrB and probably causes local melting of the DNA helix, facilitating insertion of UvrB beta-hairpin between the DNA strands. Then UvrB probes one DNA strand for the presence of a lesion. If a lesion is found the UvrA subunits dissociate and the UvrB-DNA preincision complex is formed. This complex is subsequently bound by UvrC and the second UvrB is released. If no lesion is found, the DNA wraps around the other UvrB subunit that will check the other stand for damage. The protein is UvrABC system protein B of Wolbachia sp. subsp. Brugia malayi (strain TRS).